The sequence spans 459 residues: Argininosuccinate lyase (459 aa).

The protein belongs to the lyase 1 family. Argininosuccinate lyase subfamily.

The protein resides in the cytoplasm. It carries out the reaction 2-(N(omega)-L-arginino)succinate = fumarate + L-arginine. Its pathway is amino-acid biosynthesis; L-arginine biosynthesis; L-arginine from L-ornithine and carbamoyl phosphate: step 3/3. This Prochlorococcus marinus subsp. pastoris (strain CCMP1986 / NIES-2087 / MED4) protein is Argininosuccinate lyase.